A 146-amino-acid chain; its full sequence is L-fucose mutarotase (146 aa).

Histidine 22 (proton donor) is an active-site residue. Residues aspartate 30, arginine 109, and 131 to 133 (YGN) each bind substrate.

The protein belongs to the RbsD / FucU family. FucU mutarotase subfamily. As to quaternary structure, homodecamer.

The protein resides in the cytoplasm. The enzyme catalyses alpha-L-fucose = beta-L-fucose. It functions in the pathway carbohydrate metabolism; L-fucose metabolism. Functionally, involved in the anomeric conversion of L-fucose. This chain is L-fucose mutarotase, found in Glaesserella parasuis serovar 5 (strain SH0165) (Haemophilus parasuis).